The following is a 397-amino-acid chain: Tryptophan synthase beta chain 1 (397 aa).

Lys90 carries the N6-(pyridoxal phosphate)lysine modification.

The protein belongs to the TrpB family. As to quaternary structure, tetramer of two alpha and two beta chains. The cofactor is pyridoxal 5'-phosphate.

It carries out the reaction (1S,2R)-1-C-(indol-3-yl)glycerol 3-phosphate + L-serine = D-glyceraldehyde 3-phosphate + L-tryptophan + H2O. Its pathway is amino-acid biosynthesis; L-tryptophan biosynthesis; L-tryptophan from chorismate: step 5/5. Functionally, the beta subunit is responsible for the synthesis of L-tryptophan from indole and L-serine. The chain is Tryptophan synthase beta chain 1 (trpB1) from Aquifex aeolicus (strain VF5).